The sequence spans 338 residues: Structural protein VP9 (338 aa).

It is found in the virion. In terms of biological role, plays an important role in virus transmission by the insect vector. May participate in the virus stability by binding clamp proteins and surrounding the pentameric turrets present in the virion. The protein is Structural protein VP9 of Rice ragged stunt virus (isolate Thailand) (RRSV).